Consider the following 131-residue polypeptide: Small ribosomal subunit protein uS11 (131 aa).

Residues 1–15 show a composition bias toward basic residues; it reads MAAKTVKKTRRRKER. Residues 1-23 are disordered; that stretch reads MAAKTVKKTRRRKERKNVEHGAA.

This sequence belongs to the universal ribosomal protein uS11 family. Part of the 30S ribosomal subunit. Interacts with proteins S7 and S18. Binds to IF-3.

Its function is as follows. Located on the platform of the 30S subunit, it bridges several disparate RNA helices of the 16S rRNA. Forms part of the Shine-Dalgarno cleft in the 70S ribosome. The chain is Small ribosomal subunit protein uS11 from Clostridium beijerinckii (strain ATCC 51743 / NCIMB 8052) (Clostridium acetobutylicum).